Reading from the N-terminus, the 447-residue chain is Na(+)-translocating NADH-quinone reductase subunit A (447 aa).

The protein belongs to the NqrA family. Composed of six subunits; NqrA, NqrB, NqrC, NqrD, NqrE and NqrF.

The enzyme catalyses a ubiquinone + n Na(+)(in) + NADH + H(+) = a ubiquinol + n Na(+)(out) + NAD(+). In terms of biological role, NQR complex catalyzes the reduction of ubiquinone-1 to ubiquinol by two successive reactions, coupled with the transport of Na(+) ions from the cytoplasm to the periplasm. NqrA to NqrE are probably involved in the second step, the conversion of ubisemiquinone to ubiquinol. This Yersinia pestis bv. Antiqua (strain Angola) protein is Na(+)-translocating NADH-quinone reductase subunit A.